The chain runs to 514 residues: Na(+)/H(+) antiporter NhaB (514 aa).

The next 11 helical transmembrane spans lie at 21-41 (LAIV…SPFI), 43-63 (GWLL…CYPL), 88-108 (IMAN…IFFM), 143-163 (FLDA…FYGV), 203-223 (LMMH…VGEP), 239-259 (FFLR…LTCF), 304-324 (ALIA…VGLI), 349-369 (QESL…AVII), 390-410 (LALF…VFVA), 448-468 (ATPN…SPLI), and 484-504 (IVLS…ATIW).

This sequence belongs to the NhaB Na(+)/H(+) (TC 2.A.34) antiporter family.

Its subcellular location is the cell inner membrane. It catalyses the reaction 2 Na(+)(in) + 3 H(+)(out) = 2 Na(+)(out) + 3 H(+)(in). Na(+)/H(+) antiporter that extrudes sodium in exchange for external protons. This is Na(+)/H(+) antiporter NhaB from Haemophilus influenzae (strain 86-028NP).